The primary structure comprises 511 residues: Exodeoxyribonuclease 7 large subunit (511 aa).

It belongs to the XseA family. In terms of assembly, heterooligomer composed of large and small subunits.

The protein localises to the cytoplasm. It carries out the reaction Exonucleolytic cleavage in either 5'- to 3'- or 3'- to 5'-direction to yield nucleoside 5'-phosphates.. Its function is as follows. Bidirectionally degrades single-stranded DNA into large acid-insoluble oligonucleotides, which are then degraded further into small acid-soluble oligonucleotides. In Brucella ovis (strain ATCC 25840 / 63/290 / NCTC 10512), this protein is Exodeoxyribonuclease 7 large subunit.